The chain runs to 534 residues: Lariat debranching enzyme A (534 aa).

The a divalent metal cation site is built by Cys8, His10, Asp39, and Asn84. The lariat recognition loop stretch occupies residues 124–154 (SGIFKSHDYRKGHFERPPYSKDTVRSAYHVR). 3 residues coordinate a divalent metal cation: His174, His226, and His228. 2 disordered regions span residues 386–439 (EEEK…QEDE) and 469–534 (SMAV…DEDE). The span at 388 to 400 (EKEDFDMTEDNEA) shows a compositional bias: acidic residues. The span at 413-424 (STDTSILSTSVN) shows a compositional bias: polar residues. Positions 428-439 (ITLEDDDEQEDE) are enriched in acidic residues. A compositionally biased stretch (basic and acidic residues) spans 484–499 (ELDRSESSQTEGEGKQ).

The protein belongs to the lariat debranching enzyme family. Fe(2+) serves as cofactor. Zn(2+) is required as a cofactor. Requires Mn(2+) as cofactor.

Its subcellular location is the nucleus. Active in presence of diverse metals including Fe(2+), Zn(2+), Mn(2+). Also activated by Ca(2+). Binds two metal cations in two adjacent alpha and beta metal-binding pockets. Cleaves the 2'-5' phosphodiester linkage at the branch point of excised lariat intron RNA and converts them into linear molecules that can be subsequently degraded, thereby facilitating ribonucleotide turnover. Linked to its role in pre-mRNA processing mechanism, may also participate in retrovirus replication and have an antiviral cell-intrinsic defense function. This is Lariat debranching enzyme A (dbr1-a) from Xenopus laevis (African clawed frog).